We begin with the raw amino-acid sequence, 513 residues long: 2,3-bisphosphoglycerate-independent phosphoglycerate mutase (513 aa).

Residues aspartate 12 and serine 62 each contribute to the Mn(2+) site. Serine 62 serves as the catalytic Phosphoserine intermediate. Residues histidine 123, 153 to 154 (RD), arginine 185, arginine 191, 261 to 264 (RSDR), and lysine 335 contribute to the substrate site. The Mn(2+) site is built by aspartate 402, histidine 406, aspartate 443, histidine 444, and histidine 462.

Belongs to the BPG-independent phosphoglycerate mutase family. As to quaternary structure, monomer. Mn(2+) is required as a cofactor.

The enzyme catalyses (2R)-2-phosphoglycerate = (2R)-3-phosphoglycerate. Its pathway is carbohydrate degradation; glycolysis; pyruvate from D-glyceraldehyde 3-phosphate: step 3/5. Its function is as follows. Catalyzes the interconversion of 2-phosphoglycerate and 3-phosphoglycerate. The protein is 2,3-bisphosphoglycerate-independent phosphoglycerate mutase of Thiobacillus denitrificans (strain ATCC 25259 / T1).